A 195-amino-acid chain; its full sequence is CD70 antigen (195 aa).

The Cytoplasmic segment spans residues 1–23 (MPEEGRPCPWVRWSGTAFQRQWP). The chain crosses the membrane as a helical; Signal-anchor for type II membrane protein span at residues 24–44 (WLLLVVFITVFCCWFHCSGLL). Over 45 to 195 (SKQQQRLLEH…TFFGVQWICP (151 aa)) the chain is Extracellular. The THD domain maps to 58 to 193 (HTAELQLNLT…DETFFGVQWI (136 aa)). 2 N-linked (GlcNAc...) asparagine glycosylation sites follow: N65 and N116. Cystine bridges form between C117–C153 and C135–C170. N172 carries an N-linked (GlcNAc...) asparagine glycan.

It belongs to the tumor necrosis factor family. Homotrimer. In terms of processing, N-glycosylated. In terms of tissue distribution, very low level of expression. Detected in splenocytes and thymocytes.

The protein resides in the cell membrane. In terms of biological role, expressed at the plasma membrane of B cells, it is the ligand of the CD27 receptor which is specifically expressed at the surface of T cells. The CD70-CD27 signaling pathway mediates antigen-specific T cell activation and expansion which in turn provides immune surveillance of B cells. This is CD70 antigen from Mus musculus (Mouse).